A 516-amino-acid chain; its full sequence is 7-chloro-L-tryptophan 6-halogenase KtzR (516 aa).

FAD contacts are provided by G6, T8, A9, E42, and A43. K71 is an active-site residue. V195 provides a ligand contact to FAD. Residues T357 and G358 each contribute to the chloride site. I359 is a binding site for FAD.

Belongs to the flavin-dependent halogenase family. Bacterial tryptophan halogenase subfamily.

The catalysed reaction is 7-chloro-L-tryptophan + FADH2 + chloride + O2 = 6,7-dichloro-L-tryptophan + FAD + 2 H2O. Involved in the biosynthesis of kutznerides, actinomycete-derived antifungal and antimicrobial cyclic hexadepsipeptides. Together with KtzQ, catalyzes the regiospecific dichlorination of L-tryptophan (L-Trp) to produce 6,7-dichloro-L-tryptophan. KtzR catalyzes the chlorination of 7-chloro-L-tryptophan at C6 position to yield 6,7-dichloro-L-tryptophan. Can also use L-Trp as substrate and form 6-chloro-L-tryptophan, but has a 120-fold preference for 7-chloro-L-tryptophan over L-Trp. Cannot use piperazic acid or gamma,delta-dehydropiperazic acid. The protein is 7-chloro-L-tryptophan 6-halogenase KtzR of Kutzneria sp. (strain 744).